A 402-amino-acid polypeptide reads, in one-letter code: Serine/threonine-protein phosphatase 4 regulatory subunit 2 (402 aa).

Acidic residues predominate over residues 206 to 248 (MDEEFEDEDYEDHEDEEEDEEDEDNDSDVDEMEAEEVEEDASD). 3 disordered regions span residues 206-270 (MDEE…DVTD), 291-311 (SVLS…ILSR), and 331-402 (GFIT…KKRM). Over residues 348–358 (SSSSMVSPVVS) the composition is skewed to low complexity. The segment covering 371–396 (INTFISPDTTNSVTQAEKNELSTSPL) has biased composition (polar residues).

This sequence belongs to the PPP4R2 family. Regulatory subunit (R2) of the histone H2A phosphatase complex (HTP-C) consisting of PPH3, PSY2 and PSY4.

It localises to the nucleus. Regulatory subunit of the histone H2A phosphatase complex, which dephosphorylates H2AS128ph (gamma-H2A) that has been displaced from sites of DNA lesions in the double-stranded DNA break repair process. Dephosphorylation is necessary for efficient recovery from the DNA damage checkpoint. This Kluyveromyces lactis (strain ATCC 8585 / CBS 2359 / DSM 70799 / NBRC 1267 / NRRL Y-1140 / WM37) (Yeast) protein is Serine/threonine-protein phosphatase 4 regulatory subunit 2 (PSY4).